A 575-amino-acid polypeptide reads, in one-letter code: MAASIGPKSIPETITRQTKGGRKLKYTLTVIQQPERARACGSGAKSSADRRPVDPPPVVQLRIYDETDPRQEKEITFHYNANFFLFATLEVARNIAQGRVQTSAPQAPVLTGMPVSGMAYLDRPNEAGYFIFPDLSVRHEGQYKLSFNLYEETKEEKDTDIEPSNDSSMRQMSSAAAAAESSFDWRMELKSDQFTVYSAKKFPGLSESTDLSRTVAEQGCRVRIRRDVRMRRRDTKPGGDFGEKEDEYQQGRATSPPFDYNIQAARQRALSASVHEDPQQRRGSGEISPYHSPVVNTPFRTPSISPSTPNAPLPPGNQLGWIPNGPGYAAAPSIQPPHPPPPPPSSYPQSMPATHHNQGPSTQFRQQPPQGPPPAPIGYDERRSSYSQFRPPTNPSQQQSYESDYRRMSFGYQIPASSQGPQPIAPAVQNPAYNQQSMEPTYSRNPPAYSTSFQDSVALAPLRAAEQPLAMSPLASVTSISRGTQNSAPMPSHNYNKLERSGSYSQYAPIEAEAPKSTNKRSFNDVFSTPTESLSNGRRPSAIGIDIEENTRKQEQMIYRRANGNIQNKPAPGLN.

Residues 21–225 enclose the Velvet domain; the sequence is GRKLKYTLTV…AEQGCRVRIR (205 aa). Residues 35–40 carry the Nuclear localization signal motif; sequence ERARAC. Disordered stretches follow at residues 36-56 and 227-402; these read RARACGSGAKSSADRRPVDPP and DVRM…QSYE. The segment covering 274–284 has biased composition (basic and acidic residues); it reads VHEDPQQRRGS. Residues 294–308 show a composition bias toward polar residues; it reads VVNTPFRTPSISPST. Residues 334 to 346 are compositionally biased toward pro residues; it reads IQPPHPPPPPPSS. Composition is skewed to polar residues over residues 355-365 and 385-402; these read HHNQGPSTQFR and SYSQFRPPTNPSQQQSYE. Residues 465-509 are PEST; it reads AEQPLAMSPLASVTSISRGTQNSAPMPSHNYNKLERSGSYSQYAP. Positions 513-549 are disordered; that stretch reads EAPKSTNKRSFNDVFSTPTESLSNGRRPSAIGIDIEE. Residues 516-538 are compositionally biased toward polar residues; sequence KSTNKRSFNDVFSTPTESLSNGR.

The protein belongs to the velvet family. VeA subfamily. As to quaternary structure, component of the heterotrimeric velvet complex composed of LAE1, VEL1 and VEL2; VEL1 acting as a bridging protein between LAE1 and VEL2.

The protein resides in the nucleus. The protein localises to the cytoplasm. Component of the velvet transcription factor complex that controls sexual/asexual developmental ratio in response to light, promoting sexual development in the darkness while stimulating asexual sporulation under illumination. The velvet complex hat acts as a global regulator for secondary metabolite gene expression. Controls the expression of the oxalic acid and melanin gene clusters. Also controls the expression of proteases and carbohydrate-active enzymes. Involved in the resistance to oxidative stress. Required for full virulence. The polypeptide is Developmental and secondary metabolism regulator VEL1 (Botryotinia fuckeliana (strain B05.10) (Noble rot fungus)).